A 307-amino-acid polypeptide reads, in one-letter code: MSLLTLPQAKLSELSLRQRLSHYQQNYLWEEGKLELTVSEPPSSLNCILQLQWKGTHFTLYCFGNDLANWLTADLLGAPFFTLPKELQLALLERQTVFLPKLVCNDIATASLSVTQPLLSLRLSRDNAHISFWLTSAEALFALLPARPNSERIPLPILISLRWHKVYLTLDEVDSLRLGDVLLAPEGSGPNSPVLAYVGENPWGYFQLQSNKLEFIGMSHESDELNPEPLTDLNQLPVQVSFEVGRQILDWHTLTSLEPGSLIDLTTPVDGEVRLLANGRLLGHGRLVEIQGRLGVRIERLTEVTIS.

This sequence belongs to the FliN/MopA/SpaO family.

Functionally, component of the Yop secretion machinery. The polypeptide is Yop proteins translocation protein Q (yscQ) (Yersinia pestis).